The chain runs to 354 residues: Uroporphyrinogen decarboxylase (354 aa).

Substrate contacts are provided by residues 28 to 32, aspartate 78, tyrosine 155, serine 210, and histidine 325; that span reads RQAGR.

Belongs to the uroporphyrinogen decarboxylase family. Homodimer.

It localises to the cytoplasm. The catalysed reaction is uroporphyrinogen III + 4 H(+) = coproporphyrinogen III + 4 CO2. The protein operates within porphyrin-containing compound metabolism; protoporphyrin-IX biosynthesis; coproporphyrinogen-III from 5-aminolevulinate: step 4/4. Its function is as follows. Catalyzes the decarboxylation of four acetate groups of uroporphyrinogen-III to yield coproporphyrinogen-III. In Crocosphaera subtropica (strain ATCC 51142 / BH68) (Cyanothece sp. (strain ATCC 51142)), this protein is Uroporphyrinogen decarboxylase.